A 204-amino-acid chain; its full sequence is MNSFKNFLKEWGLFLLILSLLALSRIFFWSNVRVEGHSMDPTLADGEILFVVKHLPIDRFDIVVAHEEDGNKDIVKRVIGMPGDTIRYENDKLYINDKETDEPYLADYIKRFKDDKLQSTYSGKGFEGNKGTFFRSIAQKAQAFTVDVNYNTNFSFTVPEGEYLLLGDDRLVSSDSRHVGTFKAKDITGEAKFRLWPITRIGTF.

Residues 1-10 (MNSFKNFLKE) are Cytoplasmic-facing. Residues 11-30 (WGLFLLILSLLALSRIFFWS) form a helical membrane-spanning segment. Residues 31–204 (NVRVEGHSMD…LWPITRIGTF (174 aa)) lie on the Extracellular side of the membrane. Catalysis depends on residues Ser-38 and Lys-76.

Belongs to the peptidase S26 family.

It is found in the cell membrane. The catalysed reaction is Cleavage of hydrophobic, N-terminal signal or leader sequences from secreted and periplasmic proteins.. This Streptococcus pneumoniae serotype 4 (strain ATCC BAA-334 / TIGR4) protein is Signal peptidase I (lepB).